The primary structure comprises 339 residues: Non-homologous end joining protein Ku (339 aa).

Residues 10–187 (ITFGLVNIPV…LPKATTGKPT (178 aa)) form the Ku domain. 2 disordered regions span residues 230 to 251 (DSGKTHQLTPPAEEEEAPRQGA) and 263 to 339 (SLGQ…KHAA). Basic and acidic residues predominate over residues 267–277 (RGKEDKEDATP). Basic residues predominate over residues 278–289 (ARRKAPARHAAA). Residues 290–310 (RKQPAAKRAATPPAKRASTAA) show a composition bias toward low complexity.

This sequence belongs to the prokaryotic Ku family. As to quaternary structure, homodimer. Interacts with LigD.

In terms of biological role, with LigD forms a non-homologous end joining (NHEJ) DNA repair enzyme, which repairs dsDNA breaks with reduced fidelity. Binds linear dsDNA with 5'- and 3'- overhangs but not closed circular dsDNA nor ssDNA. Recruits and stimulates the ligase activity of LigD. This is Non-homologous end joining protein Ku from Cupriavidus necator (strain ATCC 17699 / DSM 428 / KCTC 22496 / NCIMB 10442 / H16 / Stanier 337) (Ralstonia eutropha).